The primary structure comprises 473 residues: Mitochondrial adenyl nucleotide antiporter SLC25A24-A (473 aa).

The tract at residues 1–173 (MLEQVQKFLL…RFWKHSTVLD (173 aa)) is regulatory N-terminal domain. Residues 1 to 197 (MLEQVQKFLL…EKKTGQWWKH (197 aa)) lie on the Mitochondrial intermembrane side of the membrane. EF-hand domains lie at 19–54 (DSHT…MGMA), 55–88 (VGKG…EEHE), 86–121 (EHEK…LGIN), and 122–157 (ISLD…NPAD). Ca(2+) contacts are provided by D32, N34, D36, K38, E43, D68, N70, D72, H74, E79, D99, N101, D103, K105, E110, D135, D137, T139, T141, and E146. Residues 159–168 (IQQIIRFWKH) are linker region. The tract at residues 174 to 473 (IGDSLTIPDE…YEKMKIQLGI (300 aa)) is C-terminal transmembrane transporter domain. 3 Solcar repeats span residues 192–277 (GQWW…YKKL), 285–370 (LGTA…LKNY), and 382–470 (PGVL…MKIQ). Residues 198–215 (LLAGGMAGAVSRTGTAPL) traverse the membrane as a helical segment. Residues 216–251 (DRLKVMMQVHGTKGNSNIITGLKQMVKEGGVRSLWR) lie on the Mitochondrial matrix side of the membrane. A helical membrane pass occupies residues 252-271 (GNGVNVIKIAPETAMKFWAY). The Mitochondrial intermembrane portion of the chain corresponds to 272 to 294 (EQYKKLFTSESGKLGTAERFIAG). A helical membrane pass occupies residues 295–308 (SLAGATAQTSIYPM). Residues 309 to 344 (EVLKTRLAVGKTGQYSGMFDCAKKIMQKEGILAFYK) are Mitochondrial matrix-facing. Residues 345–364 (GYIPNILGIIPYAGIDLAIY) form a helical membrane-spanning segment. Residues 365–387 (ETLKNYWLQNYAKDSANPGVLVL) lie on the Mitochondrial intermembrane side of the membrane. Residues 388–405 (LGCGTVSSTCGQLASYPL) traverse the membrane as a helical segment. Residues 406–444 (ALIRTRMQAQASIEGAPQLNMGGLFRKIVAKEGFFGLYT) lie on the Mitochondrial matrix side of the membrane. A helical transmembrane segment spans residues 445-464 (GIAPNFLKVLPAVSISYVVY). Over 465-473 (EKMKIQLGI) the chain is Mitochondrial intermembrane.

Belongs to the mitochondrial carrier (TC 2.A.29) family. As to quaternary structure, monomer.

Its subcellular location is the mitochondrion inner membrane. The enzyme catalyses Mg(2+)(out) + phosphate(in) + ATP(out) = Mg(2+)(in) + phosphate(out) + ATP(in). It carries out the reaction ADP(out) + phosphate(in) + H(+)(out) = ADP(in) + phosphate(out) + H(+)(in). It catalyses the reaction AMP(out) + phosphate(in) = AMP(in) + phosphate(out). The catalysed reaction is phosphate(in) + ATP(out) + 2 H(+)(out) = phosphate(out) + ATP(in) + 2 H(+)(in). The enzyme catalyses dADP(in) + ADP(out) = dADP(out) + ADP(in). It carries out the reaction Mg(2+)(in) + ADP(out) + ATP(in) + H(+)(out) = Mg(2+)(out) + ADP(in) + ATP(out) + H(+)(in). It catalyses the reaction ADP(out) + diphosphate(in) = ADP(in) + diphosphate(out). The catalysed reaction is dAMP(in) + ADP(out) + H(+)(out) = dAMP(out) + ADP(in) + H(+)(in). The enzyme catalyses 3'-AMP(in) + ADP(out) + H(+)(out) = 3'-AMP(out) + ADP(in) + H(+)(in). It carries out the reaction dAMP(out) + phosphate(in) = dAMP(in) + phosphate(out). It catalyses the reaction 3'-AMP(out) + phosphate(in) = 3'-AMP(in) + phosphate(out). The catalysed reaction is dADP(out) + phosphate(in) + H(+)(out) = dADP(in) + phosphate(out) + H(+)(in). With respect to regulation, activated by an increase in cytosolic calcium levels that induce a conformational change of the N-terminal regulatory domain, uncapping the channel and allowing transport. Inhibited by bathophenanthroline, mersalyl, p-hydroxymercuribenzoate, bromcresol purple and tannic acid. Functionally, electroneutral antiporter that mediates the transport of adenyl nucleotides through the inner mitochondrial membrane. Originally identified as an ATP-magnesium/inorganic phosphate antiporter, it also acts as a broad specificity adenyl nucleotide antiporter. By regulating the mitochondrial matrix adenyl nucleotide pool could adapt to changing cellular energetic demands and indirectly regulate adenyl nucleotide-dependent metabolic pathways. This Xenopus laevis (African clawed frog) protein is Mitochondrial adenyl nucleotide antiporter SLC25A24-A (slc25a24-a).